The primary structure comprises 310 residues: Protein-L-isoaspartate O-methyltransferase (310 aa).

Residues 1–41 form a disordered region; it reads MSGERAKRFPLALEDLKRAPRKSEGRPGERQTAGAVPKAAD. Basic and acidic residues predominate over residues 14–29; that stretch reads EDLKRAPRKSEGRPGE. S157 is a catalytic residue.

The protein belongs to the methyltransferase superfamily. L-isoaspartyl/D-aspartyl protein methyltransferase family.

It localises to the cytoplasm. The catalysed reaction is [protein]-L-isoaspartate + S-adenosyl-L-methionine = [protein]-L-isoaspartate alpha-methyl ester + S-adenosyl-L-homocysteine. Functionally, catalyzes the methyl esterification of L-isoaspartyl residues in peptides and proteins that result from spontaneous decomposition of normal L-aspartyl and L-asparaginyl residues. It plays a role in the repair and/or degradation of damaged proteins. The protein is Protein-L-isoaspartate O-methyltransferase of Burkholderia cenocepacia (strain HI2424).